The sequence spans 484 residues: Putative myrosinase 6 (484 aa).

N-linked (GlcNAc...) asparagine glycosylation is present at Asn-28. Residues Gln-39, His-140, and 184–185 each bind a beta-D-glucoside; that span reads NQ. The cysteines at positions 204 and 207 are disulfide-linked. Residue Asn-260 is glycosylated (N-linked (GlcNAc...) asparagine). A beta-D-glucoside is bound by residues Tyr-321, Trp-440, 447–448, and Phe-456; that span reads EF. Residue Asn-462 is glycosylated (N-linked (GlcNAc...) asparagine).

Belongs to the glycosyl hydrolase 1 family.

The enzyme catalyses a thioglucoside + H2O = a sugar + a thiol.. The polypeptide is Putative myrosinase 6 (Arabidopsis thaliana (Mouse-ear cress)).